We begin with the raw amino-acid sequence, 127 residues long: Large ribosomal subunit protein uL22 (127 aa).

As to quaternary structure, part of the 50S ribosomal subunit.

In terms of biological role, this protein binds specifically to 23S rRNA; its binding is stimulated by other ribosomal proteins, e.g. L4, L17, and L20. It is important during the early stages of 50S assembly. It makes multiple contacts with different domains of the 23S rRNA in the assembled 50S subunit and ribosome. Its function is as follows. The globular domain of the protein is located near the polypeptide exit tunnel on the outside of the subunit, while an extended beta-hairpin is found that lines the wall of the exit tunnel in the center of the 70S ribosome. The protein is Large ribosomal subunit protein uL22 of Rhodopseudomonas palustris (strain ATCC BAA-98 / CGA009).